We begin with the raw amino-acid sequence, 342 residues long: MNHSLKPWNTFGIDHNAQHIVCAEDEQQLLNAWQHATAEGQPVLILGEGSNVLFLEDYRGTVIINRIKGIEIHDEPDAWYLHVGAGENWHRLVKYTLQEGMPGLENLALIPGCVGSSPIQNIGAYGVELQRVCAYVDCVELATGKQVRLTAKECRFGYRDSIFKHEYQDRFAIVAVGLRLPKEWQPVLTYGDLTRLDPTTVTPQQVFNAVCHMRTTKLPDPKVNGNAGSFFKNPVVSAETAKALLAQFPTAPNYPQAGGSVKLAAGWLIDQCQLKGMQMGGAAVHRQQALVLINEDNAKSEDVVQLAHHVRQKVGEKFNVWLEPEVRFIGASGEVSAVETIS.

The FAD-binding PCMH-type domain occupies 13-183 (IDHNAQHIVC…VAVGLRLPKE (171 aa)). Arginine 159 is an active-site residue. Serine 229 functions as the Proton donor in the catalytic mechanism. Glutamate 325 is an active-site residue.

It belongs to the MurB family. FAD serves as cofactor.

The protein localises to the cytoplasm. It catalyses the reaction UDP-N-acetyl-alpha-D-muramate + NADP(+) = UDP-N-acetyl-3-O-(1-carboxyvinyl)-alpha-D-glucosamine + NADPH + H(+). It functions in the pathway cell wall biogenesis; peptidoglycan biosynthesis. Its function is as follows. Cell wall formation. This Shigella sonnei (strain Ss046) protein is UDP-N-acetylenolpyruvoylglucosamine reductase.